The following is a 286-amino-acid chain: 33 kDa chaperonin (286 aa).

2 cysteine pairs are disulfide-bonded: Cys-225–Cys-227 and Cys-258–Cys-261.

Belongs to the HSP33 family. Post-translationally, under oxidizing conditions two disulfide bonds are formed involving the reactive cysteines. Under reducing conditions zinc is bound to the reactive cysteines and the protein is inactive.

The protein localises to the cytoplasm. In terms of biological role, redox regulated molecular chaperone. Protects both thermally unfolding and oxidatively damaged proteins from irreversible aggregation. Plays an important role in the bacterial defense system toward oxidative stress. The chain is 33 kDa chaperonin from Shewanella putrefaciens (strain CN-32 / ATCC BAA-453).